We begin with the raw amino-acid sequence, 360 residues long: uncharacterized protein (360 aa).

A 4Fe-4S ferredoxin-type domain is found at lysine 11 to glutamate 40.

It belongs to the FrhB family.

This is an uncharacterized protein from Methanocaldococcus jannaschii (strain ATCC 43067 / DSM 2661 / JAL-1 / JCM 10045 / NBRC 100440) (Methanococcus jannaschii).